The sequence spans 222 residues: Probable nicotinate-nucleotide adenylyltransferase (222 aa).

The protein belongs to the NadD family.

The enzyme catalyses nicotinate beta-D-ribonucleotide + ATP + H(+) = deamido-NAD(+) + diphosphate. It functions in the pathway cofactor biosynthesis; NAD(+) biosynthesis; deamido-NAD(+) from nicotinate D-ribonucleotide: step 1/1. In terms of biological role, catalyzes the reversible adenylation of nicotinate mononucleotide (NaMN) to nicotinic acid adenine dinucleotide (NaAD). The chain is Probable nicotinate-nucleotide adenylyltransferase from Xylella fastidiosa (strain M12).